The sequence spans 279 residues: Putative pyruvate, phosphate dikinase regulatory protein (279 aa).

153 to 160 contacts ADP; the sequence is GISRTSKT.

It belongs to the pyruvate, phosphate/water dikinase regulatory protein family. PDRP subfamily.

It carries out the reaction N(tele)-phospho-L-histidyl/L-threonyl-[pyruvate, phosphate dikinase] + ADP = N(tele)-phospho-L-histidyl/O-phospho-L-threonyl-[pyruvate, phosphate dikinase] + AMP + H(+). It catalyses the reaction N(tele)-phospho-L-histidyl/O-phospho-L-threonyl-[pyruvate, phosphate dikinase] + phosphate + H(+) = N(tele)-phospho-L-histidyl/L-threonyl-[pyruvate, phosphate dikinase] + diphosphate. Functionally, bifunctional serine/threonine kinase and phosphorylase involved in the regulation of the pyruvate, phosphate dikinase (PPDK) by catalyzing its phosphorylation/dephosphorylation. The chain is Putative pyruvate, phosphate dikinase regulatory protein from Brucella abortus (strain 2308).